Consider the following 349-residue polypeptide: Short-wave-sensitive opsin 1 (349 aa).

Residues 1 to 34 lie on the Extracellular side of the membrane; that stretch reads MSKMPEEEEFYLFKNISSVGPWDGPQYHIAPVWA. A glycan (N-linked (GlcNAc...) asparagine) is linked at Asn15. The chain crosses the membrane as a helical span at residues 35 to 59; it reads FQLQAAFMGIVFLAGLPLNSMVLVA. Residues 60-71 lie on the Cytoplasmic side of the membrane; sequence TVRYKKLRHPLN. Residues 72–97 traverse the membrane as a helical segment; it reads YVLVNVSVGGFLLCIFSVLPVFVNSC. The Extracellular portion of the chain corresponds to 98-111; sequence NGYFVFGRHVCALE. Residues Cys108 and Cys185 are joined by a disulfide bond. The chain crosses the membrane as a helical span at residues 112–131; the sequence is GFLGTVAGLVTGWSLAFLAF. The Cytoplasmic portion of the chain corresponds to 132 to 150; the sequence is ERYIVICKPFGNFRFSSKH. Residues 151–174 form a helical membrane-spanning segment; sequence ALMVVLTTWTIGIGVSIPPFFGWS. The Extracellular segment spans residues 175–200; sequence RYIAEGLQCSCGPDWYTVGTKYRSEY. A helical transmembrane segment spans residues 201 to 228; the sequence is YTWFLFIFCFIVPLSLICFSYAQLLRAL. Topologically, residues 229 to 250 are cytoplasmic; sequence KAVAAQQQESATTQKAEREVSR. Residues 251-274 traverse the membrane as a helical segment; the sequence is MVVVMVGSFCVCYVPYAALAMYMV. Over 275-282 the chain is Extracellular; sequence NNRNHGLD. The helical transmembrane segment at 283–307 threads the bilayer; it reads LRLVSIPAFFSKSSCIYNPIIYCFM. Position 294 is an N6-(retinylidene)lysine (Lys294). Residues 308-349 lie on the Cytoplasmic side of the membrane; the sequence is NKQFRACIMEMVCGKAMTDESDISSSQKTEVSTVSSSQVGPN.

It belongs to the G-protein coupled receptor 1 family. Opsin subfamily. Phosphorylated on some or all of the serine and threonine residues present in the C-terminal region.

Its subcellular location is the cell membrane. It localises to the photoreceptor inner segment. The protein localises to the cell projection. It is found in the cilium. The protein resides in the photoreceptor outer segment. Its subcellular location is the cytoplasm. It localises to the perinuclear region. In terms of biological role, visual pigments are the light-absorbing molecules that mediate vision. They consist of an apoprotein, opsin, covalently linked to cis-retinal. Required for the maintenance of cone outer segment organization in the ventral retina, but not essential for the maintenance of functioning cone photoreceptors. Involved in ensuring correct abundance and localization of retinal membrane proteins. May increase spectral sensitivity in dim light. In Saimiri boliviensis boliviensis (Bolivian squirrel monkey), this protein is Short-wave-sensitive opsin 1 (OPN1SW).